A 407-amino-acid polypeptide reads, in one-letter code: Protease ElaD (407 aa).

His231 is an active-site residue. Residue Cys317 is the Nucleophile of the active site.

It belongs to the peptidase C79 family.

Protease that can act as an efficient and specific deubiquitinating enzyme in vitro. Does not possess desumoylating and deneddylating activities. The physiological substrate is unknown. The polypeptide is Protease ElaD (elaD) (Escherichia coli O157:H7).